A 345-amino-acid polypeptide reads, in one-letter code: MSADFWSSSQRNRWQLTRHSLLESRRKLLLLEKKMIQNGFIKDYPNVEYDANTRIYLHNLLIKLGRRLNVRQIALATAEIYMSRFLIKVSLKEINVYLLVTTCLYAACKIEECPQHIRLITSEARNLWPEYIPQDVTKLAEFEFYLIEEMDSFLVLHHPYRSLLQIRDYLNENFALYGFSLSDDELQNSWSLINDSYITDLHLLLPPHIIAIATIYITIVLKKNISSLRLGANSMSNDTVGMDPHTKPNSNSIHAEDLMALATGGSAINDIGNPSSGTNGFHDIELDENTIKINKFMTFLDHSHVNLNEVVEAIQDIITLYAIWNRYNEMSVKKVLQDMLLNRSV.

In terms of domain architecture, Cyclin N-terminal spans 23–147 (ESRRKLLLLE…KLAEFEFYLI (125 aa)).

The protein belongs to the cyclin family. Cyclin C subfamily. In terms of assembly, component of the SRB8-11 complex, a regulatory module of the Mediator complex.

The protein localises to the nucleus. Component of the SRB8-11 complex. The SRB8-11 complex is a regulatory module of the Mediator complex which is itself involved in regulation of basal and activated RNA polymerase II-dependent transcription. The SRB8-11 complex may be involved in the transcriptional repression of a subset of genes regulated by Mediator. It may inhibit the association of the Mediator complex with RNA polymerase II to form the holoenzyme complex. The SRB8-11 complex phosphorylates the C-terminal domain (CTD) of the largest subunit of RNA polymerase II. This Debaryomyces hansenii (strain ATCC 36239 / CBS 767 / BCRC 21394 / JCM 1990 / NBRC 0083 / IGC 2968) (Yeast) protein is RNA polymerase II holoenzyme cyclin-like subunit (SSN8).